We begin with the raw amino-acid sequence, 431 residues long: Histidine--tRNA ligase (431 aa).

The protein belongs to the class-II aminoacyl-tRNA synthetase family. In terms of assembly, homodimer.

It localises to the cytoplasm. It carries out the reaction tRNA(His) + L-histidine + ATP = L-histidyl-tRNA(His) + AMP + diphosphate + H(+). The protein is Histidine--tRNA ligase of Levilactobacillus brevis (strain ATCC 367 / BCRC 12310 / CIP 105137 / JCM 1170 / LMG 11437 / NCIMB 947 / NCTC 947) (Lactobacillus brevis).